We begin with the raw amino-acid sequence, 85 residues long: Colicin-E8 immunity protein in ColE6 (85 aa).

Belongs to the colicins ColE2/ColE8/ColE9 and pyocins S1/S2 family.

The chain is Colicin-E8 immunity protein in ColE6 (imm) from Escherichia coli.